Here is a 260-residue protein sequence, read N- to C-terminus: MINRFLIALSFLTVLPLKFKEINEKELIRSIIFFPFIGFLEGVFCIFLVNIFKQIFSSSVISIILLVFLFSVRGIFHIDGLSDTFDALFYKGTGQKEKDLQQRLQIMKDSVIGVAGAVALVLDVLCRFAFVKELIDINQFLIFLFMFCFSRWIVIPLMYYGKPARTTGLGVLFIGKISSWQVIISTVLPIFLLVYFTIEKNFIFLPLIALFLFFISYILKKFFERKFNGITGDHLGATVEITEIVFLICFLLGEKLWLSY.

The next 7 helical transmembrane spans lie at 31 to 51 (IIFF…LVNI), 55 to 75 (IFSS…VRGI), 111 to 131 (VIGV…FAFV), 140 to 160 (FLIF…LMYY), 177 to 197 (ISSW…VYFT), 202 to 222 (FIFL…LKKF), and 234 to 254 (HLGA…LLGE).

It belongs to the CobS family. Mg(2+) serves as cofactor.

It localises to the cell inner membrane. The enzyme catalyses alpha-ribazole + adenosylcob(III)inamide-GDP = adenosylcob(III)alamin + GMP + H(+). It catalyses the reaction alpha-ribazole 5'-phosphate + adenosylcob(III)inamide-GDP = adenosylcob(III)alamin 5'-phosphate + GMP + H(+). Its pathway is cofactor biosynthesis; adenosylcobalamin biosynthesis; adenosylcobalamin from cob(II)yrinate a,c-diamide: step 7/7. Joins adenosylcobinamide-GDP and alpha-ribazole to generate adenosylcobalamin (Ado-cobalamin). Also synthesizes adenosylcobalamin 5'-phosphate from adenosylcobinamide-GDP and alpha-ribazole 5'-phosphate. The polypeptide is Adenosylcobinamide-GDP ribazoletransferase (Thermodesulfovibrio yellowstonii (strain ATCC 51303 / DSM 11347 / YP87)).